A 432-amino-acid polypeptide reads, in one-letter code: Histidine--tRNA ligase (432 aa).

It belongs to the class-II aminoacyl-tRNA synthetase family. As to quaternary structure, homodimer.

It is found in the cytoplasm. The enzyme catalyses tRNA(His) + L-histidine + ATP = L-histidyl-tRNA(His) + AMP + diphosphate + H(+). The protein is Histidine--tRNA ligase of Symbiobacterium thermophilum (strain DSM 24528 / JCM 14929 / IAM 14863 / T).